Consider the following 178-residue polypeptide: MTQLSSSDVPGMGRRQFMNLLTFGSVTGVALGALYPVANYFIPPKAAGSGGGTSAKDELGNPITASGWLSSHPEGDRSLVQGLKGDPTYLIVEGEDAIGSYGINAICTHLGCVVPWNSGANKFMCPCHGSQYDSTGKVVRGPAPLSLALANVSVENDNVFVSQWTETDFRTGDKPWWA.

The helical transmembrane segment at 20 to 42 (LLTFGSVTGVALGALYPVANYFI) threads the bilayer. In terms of domain architecture, Rieske spans 65-161 (ASGWLSSHPE…VSVENDNVFV (97 aa)). Positions 107, 109, 125, and 128 each coordinate [2Fe-2S] cluster. Cysteines 112 and 127 form a disulfide.

The protein belongs to the Rieske iron-sulfur protein family. In terms of assembly, the 4 large subunits of the cytochrome b6-f complex are cytochrome b6, subunit IV (17 kDa polypeptide, PetD), cytochrome f and the Rieske protein, while the 4 small subunits are PetG, PetL, PetM and PetN. The complex functions as a dimer. Requires [2Fe-2S] cluster as cofactor.

It is found in the cellular thylakoid membrane. It carries out the reaction 2 oxidized [plastocyanin] + a plastoquinol + 2 H(+)(in) = 2 reduced [plastocyanin] + a plastoquinone + 4 H(+)(out). Component of the cytochrome b6-f complex, which mediates electron transfer between photosystem II (PSII) and photosystem I (PSI), cyclic electron flow around PSI, and state transitions. In Synechococcus sp. (strain CC9605), this protein is Cytochrome b6-f complex iron-sulfur subunit.